We begin with the raw amino-acid sequence, 225 residues long: ATP-dependent Clp protease proteolytic subunit (225 aa).

The active-site Nucleophile is Ser-123. His-148 is an active-site residue.

The protein belongs to the peptidase S14 family. In terms of assembly, fourteen ClpP subunits assemble into 2 heptameric rings which stack back to back to give a disk-like structure with a central cavity, resembling the structure of eukaryotic proteasomes.

The protein localises to the cytoplasm. It catalyses the reaction Hydrolysis of proteins to small peptides in the presence of ATP and magnesium. alpha-casein is the usual test substrate. In the absence of ATP, only oligopeptides shorter than five residues are hydrolyzed (such as succinyl-Leu-Tyr-|-NHMec, and Leu-Tyr-Leu-|-Tyr-Trp, in which cleavage of the -Tyr-|-Leu- and -Tyr-|-Trp bonds also occurs).. Its function is as follows. Cleaves peptides in various proteins in a process that requires ATP hydrolysis. Has a chymotrypsin-like activity. Plays a major role in the degradation of misfolded proteins. The sequence is that of ATP-dependent Clp protease proteolytic subunit from Chlorobium luteolum (strain DSM 273 / BCRC 81028 / 2530) (Pelodictyon luteolum).